The sequence spans 933 residues: Phosphoenolpyruvate carboxylase (933 aa).

Active-site residues include histidine 158 and lysine 592.

It belongs to the PEPCase type 1 family. Mg(2+) is required as a cofactor.

The catalysed reaction is oxaloacetate + phosphate = phosphoenolpyruvate + hydrogencarbonate. Its function is as follows. Forms oxaloacetate, a four-carbon dicarboxylic acid source for the tricarboxylic acid cycle. This is Phosphoenolpyruvate carboxylase from Nitrosomonas europaea (strain ATCC 19718 / CIP 103999 / KCTC 2705 / NBRC 14298).